The following is a 574-amino-acid chain: ESX-1 secretion system protein EccA1 (574 aa).

335–342 (GPPGTGKT) is a binding site for ATP.

This sequence belongs to the CbxX/CfxQ family. Part of the ESX-1 / type VII secretion system (T7SS), which is composed of cytosolic and membrane components.

The protein localises to the cytoplasm. Functionally, part of the ESX-1 / type VII specialized secretion system (T7SS), which exports several proteins including EsxA and EsxB. Plays a role in DNA conjugation, in both donor and recipient strains. EccA1 exhibits ATPase activity and may provide energy for the export of ESX-1 substrates. This Mycolicibacterium smegmatis (strain ATCC 700084 / mc(2)155) (Mycobacterium smegmatis) protein is ESX-1 secretion system protein EccA1.